Here is a 268-residue protein sequence, read N- to C-terminus: Probable 1-acyl-sn-glycerol-3-phosphate acyltransferase (268 aa).

Residues 92-97 carry the HXXXXD motif motif; it reads HKSNLD.

Belongs to the 1-acyl-sn-glycerol-3-phosphate acyltransferase family.

The catalysed reaction is a 1-acyl-sn-glycero-3-phosphate + an acyl-CoA = a 1,2-diacyl-sn-glycero-3-phosphate + CoA. It functions in the pathway phospholipid metabolism; CDP-diacylglycerol biosynthesis; CDP-diacylglycerol from sn-glycerol 3-phosphate: step 2/3. Functionally, converts lysophosphatidic acid (LPA) into phosphatidic acid by incorporating acyl moiety at the 2 position. The sequence is that of Probable 1-acyl-sn-glycerol-3-phosphate acyltransferase (plsC) from Mycoplasma genitalium (strain ATCC 33530 / DSM 19775 / NCTC 10195 / G37) (Mycoplasmoides genitalium).